Reading from the N-terminus, the 542-residue chain is Protein phosphatase 1G (542 aa).

A lipid anchor (N-myristoyl glycine) is attached at Gly2. Position 22 is an omega-N-methylarginine (Arg22). The PPM-type phosphatase domain occupies 26–502; the sequence is PYGFSAMQGW…DNMTCIIICF (477 aa). 2 residues coordinate Mn(2+): Asp60 and Gly61. 2 disordered regions span residues 118–139 and 162–325; these read AGRP…DVDN and QNCQ…SDSG. Residue Thr122 is modified to Phosphothreonine. 2 stretches are compositionally biased toward acidic residues: residues 123-139 and 259-309; these read EDED…DVDN and DSED…DEEM. Lys380 carries the N6-acetyllysine modification. 2 residues coordinate Mn(2+): Asp438 and Asp493. The interval 510 to 542 is disordered; sequence LQPESGKRKLEEALSTEGAEENGNSDKKKAKRD. Ser524 carries the phosphoserine modification.

Belongs to the PP2C family. Interacts with NOL3; may dephosphorylate NOL3. Mg(2+) serves as cofactor. Requires Mn(2+) as cofactor.

It is found in the cytoplasm. Its subcellular location is the membrane. The enzyme catalyses O-phospho-L-seryl-[protein] + H2O = L-seryl-[protein] + phosphate. It carries out the reaction O-phospho-L-threonyl-[protein] + H2O = L-threonyl-[protein] + phosphate. The chain is Protein phosphatase 1G from Rattus norvegicus (Rat).